The primary structure comprises 252 residues: C4b-binding protein beta chain (252 aa).

The signal sequence occupies residues 1-17 (MFFWCACCLMVAWRVSA). Sushi domains are found at residues 21–78 (EHCP…ECRL), 79–136 (GHCP…ICKS), and 137–193 (RDCD…VCKL). 6 cysteine pairs are disulfide-bonded: Cys23/Cys63, Cys49/Cys76, Cys81/Cys121, Cys107/Cys134, Cys139/Cys179, and Cys165/Cys191. 5 N-linked (GlcNAc...) asparagine glycosylation sites follow: Asn64, Asn71, Asn98, Asn117, and Asn154.

Disulfide-linked complex of alpha and beta chains of 3 possible sorts: a 570 kDa complex of 7 alpha chains and 1 beta chain, a 530 kDa homoheptamer of alpha chains or a 500 kDa complex of 6 alpha chains and 1 beta chain. The central body of the alpha chain homomer supports tentacles, each with the binding site for C4b at the end.

Its subcellular location is the secreted. Functionally, controls the classical pathway of complement activation. It binds as a cofactor to C3b/C4b inactivator (C3bINA), which then hydrolyzes the complement fragment C4b. It also accelerates the degradation of the C4bC2a complex (C3 convertase) by dissociating the complement fragment C2a. It also interacts with anticoagulant protein S and with serum amyloid P component. The beta chain binds protein S. This chain is C4b-binding protein beta chain (C4BPB), found in Homo sapiens (Human).